A 343-amino-acid polypeptide reads, in one-letter code: 2-alkenal reductase (NADP(+)-dependent) (343 aa).

Substrate contacts are provided by Y55 and Y80. Residues 165-166 (AV), G186, K190, Y206, N230, C252, Y258, 282-284 (FLV), and N332 each bind NADP(+).

This sequence belongs to the NADP-dependent oxidoreductase L4BD family. In terms of assembly, homodimer.

The enzyme catalyses an n-alkanal + NADP(+) = an alk-2-enal + NADPH + H(+). Reduces the C=C double bonds of alpha, beta unsaturated enones, but has no activity on enones with an endocyclic C=C double-bond. Shows a high specificity for NADPH as the hybrid donor. Substrates are 1-nitrocyclohexene, 2-methylpentenal, trans-cinnamaldehyde, methyl-trans-2-methylcinnamaldehyde, trans-2-nonenal and 1-octen-3-one. Reduced activity with aplha-methyl transcinnamaldehyde, 1-cyclohexene-1-carboxaldehyde, methyl crotonate, (R)-pulegone, and dimethyl itaconate and no activity with maleimides, citral, (5R)- or (5S)-carvone, (S)-perillyl alcohol, and substituted cyclohexenones and cyclopentenones. May also act as a allyl-alcohol dehydrogenase by catalyzing the dehydrogenation of secondary allylic alcohols rather than saturated secondary alcohols. Allyl-alcohol dehydrogenase is specific for the S-stereoisomer of the alcohols. The chain is 2-alkenal reductase (NADP(+)-dependent) (DBR) from Nicotiana tabacum (Common tobacco).